Here is a 103-residue protein sequence, read N- to C-terminus: UPF0473 protein LBA0420 (103 aa).

This sequence belongs to the UPF0473 family.

The sequence is that of UPF0473 protein LBA0420 from Lactobacillus acidophilus (strain ATCC 700396 / NCK56 / N2 / NCFM).